A 249-amino-acid chain; its full sequence is Probable transcriptional regulatory protein OTBS_0251 (249 aa).

The protein belongs to the TACO1 family.

The protein localises to the cytoplasm. This is Probable transcriptional regulatory protein OTBS_0251 from Orientia tsutsugamushi (strain Boryong) (Rickettsia tsutsugamushi).